The primary structure comprises 509 residues: MASTAHRQPSRPTTRQRQRTGRACEECRRRKLRCDGQQPRCGVCVDSGVTCEVNSQRRPRGPKKGYLTALRNRVAMLETRLPAQHLVGPLSEFNPLSTPLTNDHHDGCSVSSASSRSDSNPPPTVSEPDMSLPNTTTSVSSAPSFATCSKDIGGAEPITELVQAELNQLYFDRVHPSIQILHQRRYLGWARNAAKKTSRRCLQYAVWTLASLLSAQFQHLQDSFYQETKRTLEFSYLSGDSNAPVDTEEIQAWILIATYESMRTFHRSAWMSAGRAFRLVQLMRLHEIDSPTKPPVPEADLVETEEKRRVFWMAYFLDHLLSMRNNWPITLNEHVICTRLPAPDMEFQSGQPVLGAFLSEAIMDVMPQTTSPFNECVILATICGRSLFHAQQYSVRFVYGELAPNWTDQHQWLDNVLTNRLQILSQYYPSPTQICDPMLSFAHIMGQASVIHLYKGMASVVWAVDDGAWVVEYQRRALSAAQEIVKLAKGLTEFNFFKVCHTASLPCND.

Residues 1–22 (MASTAHRQPSRPTTRQRQRTGR) are disordered. The zn(2)-C6 fungal-type DNA-binding region spans 24–51 (CEECRRRKLRCDGQQPRCGVCVDSGVTC). Positions 97–143 (STPLTNDHHDGCSVSSASSRSDSNPPPTVSEPDMSLPNTTTSVSSAP) are disordered. A compositionally biased stretch (low complexity) spans 109 to 119 (SVSSASSRSDS). Over residues 132–143 (LPNTTTSVSSAP) the composition is skewed to polar residues.

It localises to the nucleus. Transcription factor that regulates the expression of the gene cluster that mediates the biosynthesis of the mycotoxin citrinin, a hepato-nephrotoxic compound to humans due to inhibition of respiration complex III. The protein is Citrinin biosynthesis transcriptional activator mrl3 of Monascus ruber (Mold).